The chain runs to 399 residues: S-adenosylmethionine synthase (399 aa).

H16 contributes to the ATP binding site. D18 is a Mg(2+) binding site. K(+) is bound at residue E44. L-methionine-binding residues include E57 and Q100. The flexible loop stretch occupies residues 100–110 (QSPDIAQGVDD). ATP-binding positions include 174–176 (DAK), 241–242 (RF), D250, 256–257 (RK), A273, and K277. L-methionine is bound at residue D250. K281 contacts L-methionine.

Belongs to the AdoMet synthase family. Homotetramer; dimer of dimers. It depends on Mg(2+) as a cofactor. K(+) is required as a cofactor.

The protein localises to the cytoplasm. The enzyme catalyses L-methionine + ATP + H2O = S-adenosyl-L-methionine + phosphate + diphosphate. The protein operates within amino-acid biosynthesis; S-adenosyl-L-methionine biosynthesis; S-adenosyl-L-methionine from L-methionine: step 1/1. Functionally, catalyzes the formation of S-adenosylmethionine (AdoMet) from methionine and ATP. The overall synthetic reaction is composed of two sequential steps, AdoMet formation and the subsequent tripolyphosphate hydrolysis which occurs prior to release of AdoMet from the enzyme. The polypeptide is S-adenosylmethionine synthase (Latilactobacillus sakei subsp. sakei (strain 23K) (Lactobacillus sakei subsp. sakei)).